Here is a 336-residue protein sequence, read N- to C-terminus: Dihydroorotate dehydrogenase (quinone) (336 aa).

FMN is bound by residues 62–66 (AGLDK) and Thr-86. Lys-66 is a substrate binding site. Position 111–115 (111–115 (NRMGF)) interacts with substrate. FMN-binding residues include Asn-139 and Asn-172. A substrate-binding site is contributed by Asn-172. The active-site Nucleophile is Ser-175. Residue Asn-177 participates in substrate binding. Residues Lys-217 and Thr-245 each contribute to the FMN site. 246-247 (NT) serves as a coordination point for substrate. FMN contacts are provided by residues Gly-268, Gly-297, and 318–319 (YS).

The protein belongs to the dihydroorotate dehydrogenase family. Type 2 subfamily. In terms of assembly, monomer. FMN is required as a cofactor.

It localises to the cell membrane. It carries out the reaction (S)-dihydroorotate + a quinone = orotate + a quinol. It functions in the pathway pyrimidine metabolism; UMP biosynthesis via de novo pathway; orotate from (S)-dihydroorotate (quinone route): step 1/1. In terms of biological role, catalyzes the conversion of dihydroorotate to orotate with quinone as electron acceptor. The sequence is that of Dihydroorotate dehydrogenase (quinone) from Escherichia coli O17:K52:H18 (strain UMN026 / ExPEC).